The primary structure comprises 76 residues: Probable insulin-like peptide alpha-type 1 (76 aa).

An N-terminal signal peptide occupies residues 1–24; the sequence is MKTYSFFVLFIVFIFFISSSKSHS. 3 disulfides stabilise this stretch: C32/C60, C44/C73, and C48/C74.

This sequence belongs to the insulin family.

Its subcellular location is the secreted. This chain is Probable insulin-like peptide alpha-type 1 (ins-21), found in Caenorhabditis elegans.